The following is a 405-amino-acid chain: S-adenosylmethionine synthase (405 aa).

Residue 141 to 146 (GQGSVD) participates in ATP binding.

It belongs to the AdoMet synthase 2 family. The cofactor is Mg(2+).

The enzyme catalyses L-methionine + ATP + H2O = S-adenosyl-L-methionine + phosphate + diphosphate. Its pathway is amino-acid biosynthesis; S-adenosyl-L-methionine biosynthesis; S-adenosyl-L-methionine from L-methionine: step 1/1. Catalyzes the formation of S-adenosylmethionine from methionine and ATP. The sequence is that of S-adenosylmethionine synthase from Methanococcus maripaludis (strain C6 / ATCC BAA-1332).